Reading from the N-terminus, the 347-residue chain is Selenide, water dikinase (347 aa).

The active site involves Cys-17. ATP-binding positions include Lys-20 and 48-50; that span reads TRD. Position 51 (Asp-51) interacts with Mg(2+). ATP contacts are provided by residues Asp-68, Asp-91, and 139–141; that span reads GHS. Asp-91 provides a ligand contact to Mg(2+). Residue Asp-227 participates in Mg(2+) binding.

It belongs to the selenophosphate synthase 1 family. Class I subfamily. In terms of assembly, homodimer. Mg(2+) is required as a cofactor.

The catalysed reaction is hydrogenselenide + ATP + H2O = selenophosphate + AMP + phosphate + 2 H(+). Synthesizes selenophosphate from selenide and ATP. This chain is Selenide, water dikinase, found in Salmonella typhimurium (strain LT2 / SGSC1412 / ATCC 700720).